The chain runs to 125 residues: Oxytocin-neurophysin 1 (125 aa).

The signal sequence occupies residues 1 to 19 (MAGSSLACCLLGLLALTSA). A disulfide bond links Cys-20 and Cys-25. Gly-28 bears the Glycine amide mark. 7 cysteine pairs are disulfide-bonded: Cys-41–Cys-85, Cys-44–Cys-58, Cys-52–Cys-75, Cys-59–Cys-65, Cys-92–Cys-104, Cys-98–Cys-116, and Cys-105–Cys-110.

This sequence belongs to the vasopressin/oxytocin family. In terms of assembly, interacts with oxytocin receptor (Ki=1.5 nM). Interacts with vasopressin V1aR/AVPR1A (Ki=37 nM), V1bR/AVPR1B (Ki=222 nM), and V2R/AVPR2 receptors (Ki=823 nM).

Functionally, neurophysin 1 specifically binds oxytocin. Its function is as follows. Oxytocin causes contraction of the smooth muscle of the uterus and of the mammary gland. Acts by binding to oxytocin receptor (OXTR). The polypeptide is Oxytocin-neurophysin 1 (OXT) (Ovis aries (Sheep)).